A 446-amino-acid polypeptide reads, in one-letter code: Adenylosuccinate synthetase (446 aa).

Residues 20 to 26 (GDEGKGK) and 48 to 50 (GHT) contribute to the GTP site. Asp-21 functions as the Proton acceptor in the catalytic mechanism. 2 residues coordinate Mg(2+): Asp-21 and Gly-48. IMP-binding positions include 21–24 (DEGK), 46–49 (NAGH), Thr-137, Arg-151, Gln-232, Thr-247, and Arg-319. The Proton donor role is filled by His-49. Residue 315–321 (SVTGRPR) coordinates substrate. GTP is bound by residues Arg-321, 347 to 349 (KLD), and 429 to 431 (STG).

The protein belongs to the adenylosuccinate synthetase family. Homodimer. The cofactor is Mg(2+).

Its subcellular location is the cytoplasm. The catalysed reaction is IMP + L-aspartate + GTP = N(6)-(1,2-dicarboxyethyl)-AMP + GDP + phosphate + 2 H(+). Its pathway is purine metabolism; AMP biosynthesis via de novo pathway; AMP from IMP: step 1/2. Functionally, plays an important role in the de novo pathway of purine nucleotide biosynthesis. Catalyzes the first committed step in the biosynthesis of AMP from IMP. In Polynucleobacter necessarius subsp. necessarius (strain STIR1), this protein is Adenylosuccinate synthetase.